The sequence spans 203 residues: Large ribosomal subunit protein uL13 (203 aa).

At Ala-2 the chain carries N-acetylalanine. Arg-59 is modified (citrulline). Residue Ser-77 is modified to Phosphoserine. Arg-140 is modified (citrulline). At Lys-191 the chain carries N6-acetyllysine.

The protein belongs to the universal ribosomal protein uL13 family. In terms of assembly, component of the 60S ribosome. Component of the GAIT complex. Interacts with EIF4G1. Phosphorylation at Ser-77 upon interferon-gamma treatment in macrophages involves a DAPK1-DAPK3 kinase cascade and is causing release from the ribosome, association with the GAIT complex and subsequent involvement in transcript-selective translation inhibition. In terms of processing, citrullinated by PADI4.

The protein localises to the cytoplasm. Functionally, associated with ribosomes but is not required for canonical ribosome function and has extra-ribosomal functions. Component of the GAIT (gamma interferon-activated inhibitor of translation) complex which mediates interferon-gamma-induced transcript-selective translation inhibition in inflammation processes. Upon interferon-gamma activation and subsequent phosphorylation dissociates from the ribosome and assembles into the GAIT complex which binds to stem loop-containing GAIT elements in the 3'-UTR of diverse inflammatory mRNAs (such as ceruplasmin) and suppresses their translation. In the GAIT complex interacts with m7G cap-bound eIF4G at or near the eIF3-binding site and blocks the recruitment of the 43S ribosomal complex. Involved in methylation of rRNA. In Rattus norvegicus (Rat), this protein is Large ribosomal subunit protein uL13 (Rpl13a).